We begin with the raw amino-acid sequence, 376 residues long: Erythronate-4-phosphate dehydrogenase (376 aa).

Residues Ser45 and Thr67 each contribute to the substrate site. Asp147 provides a ligand contact to NAD(+). Arg209 is an active-site residue. Asp233 is an NAD(+) binding site. Residue Glu238 is part of the active site. His255 functions as the Proton donor in the catalytic mechanism. Residue Gly258 participates in NAD(+) binding. Position 259 (Tyr259) interacts with substrate.

It belongs to the D-isomer specific 2-hydroxyacid dehydrogenase family. PdxB subfamily. In terms of assembly, homodimer.

It is found in the cytoplasm. It catalyses the reaction 4-phospho-D-erythronate + NAD(+) = (R)-3-hydroxy-2-oxo-4-phosphooxybutanoate + NADH + H(+). The protein operates within cofactor biosynthesis; pyridoxine 5'-phosphate biosynthesis; pyridoxine 5'-phosphate from D-erythrose 4-phosphate: step 2/5. Its function is as follows. Catalyzes the oxidation of erythronate-4-phosphate to 3-hydroxy-2-oxo-4-phosphonooxybutanoate. The chain is Erythronate-4-phosphate dehydrogenase from Shewanella sp. (strain MR-7).